The following is a 266-amino-acid chain: MSTATGVRAGRRFTVGRSEDATHPDTIRAAISEFIATAIFVFAAEGSVLSLGKMYHDHSTISTAGGLVAVALAHALGLAVAVAVAVNVSGGHVNPAVTFGALVGGRVSLVRAVLYWAAQLLGAVAATLLLRLATGGARPPGFALASGVGDGHAVLLEAVMTFGFVYAYYATVVDPKRGHLGTIAPLAVGFLLGANVLAGGPFDGAGMNPARVFGPALVGWRWRHHWVYWLGPFLGAGLAGLVYEYLLIPPADAVPHTHQPLAPEDY.

A run of 2 helical transmembrane segments spans residues 29-49 (AAIS…GSVL) and 66-86 (GLVA…AVAV). The NPA 1 motif lies at 94-96 (NPA). The next 3 helical transmembrane spans lie at 109-129 (LVRA…ATLL), 153-173 (AVLL…ATVV), and 180-200 (LGTI…LAGG). The short motif at 208-210 (NPA) is the NPA 2 element. The chain crosses the membrane as a helical span at residues 228–248 (YWLGPFLGAGLAGLVYEYLLI).

The protein belongs to the MIP/aquaporin (TC 1.A.8) family. TIP (TC 1.A.8.10) subfamily.

Its subcellular location is the vacuole membrane. Functionally, aquaporins facilitate the transport of water and small neutral solutes across cell membranes. The protein is Aquaporin TIP3-2 (TIP3-2) of Zea mays (Maize).